The following is a 745-amino-acid chain: MQRDYLIRVETESMLDFKRLNGLMIGFVIKGEAHIYDENNMTQCNSGDIFIINHRDLYRFQLQQDGIICYIQFQMKYLADKFDDVHCLYFHLTDATTTKNIHQLRNIMARLVSTHIRHNELSKLTEQQLVIQLLMHMIHYVPRTYHSNQSILNDDKVNQVCDYIELHFHEDLSLSELSEYVGWSESHLSKKFAESLGVGFQHFLNTTRIEHAKLDLTYTDETITDIALQNGFSSAASFARTFKHFTHQTPKQYRGDRPAITENQQSAQHNYHDRELILLLNDYIEEMNHFIEDIEKVNYKEITFQPTNHQLNQFNHIIQVGYLRNLLNTQYQSQLLTCHSDFQVNEVLAYDVMPYIMKKLNAPFTYDAEISNIFYDIDLCLDFLLDHNFSLTMHLNQYDSRDYIDAFKVFIHHVALHVSHRKDLKFNLYVTTLHNSLIEMIDYFKALFPNGGLYVHLDQATERHLPLLKRLEPHIDHFVFDANSNDAVDFNKMNDDEFKTASQMIINKTNYLIDLMHRHHLKRPLILLNWNTLTGDTFITNGEYFRGGIIIEQLLKLSSKVEGIGYWLNYDLHVSHCKNERDYMNSIELFHQYNGKRPVYFTALLFNKLTSNILYSDDTCIVTGTDSNFQILLYDAKHFNPYLALDNQMNMRATEMIHLNINALEEGIYKIKHFTLDKENGALFNLWRKHHTIHGMDKDSIDYVNRMSFPKLEVYDIDVTDTLALNIKMITNGIHLIEVKRYPSS.

The 99-residue stretch at 158-256 folds into the HTH araC/xylS-type domain; it reads NQVCDYIELH…HQTPKQYRGD (99 aa). 2 consecutive DNA-binding regions (H-T-H motif) follow at residues 175–196 and 223–246; these read SELSEYVGWSESHLSKKFAESL and ITDIALQNGFSSAASFARTFKHFT.

This is an uncharacterized protein from Staphylococcus aureus (strain MRSA252).